The primary structure comprises 193 residues: Major intrinsically disordered NOTCH2-binding receptor 1-like homolog (193 aa).

Position 82 is a phosphoserine (Ser82). An N-linked (GlcNAc...) asparagine glycan is attached at Asn128. A helical membrane pass occupies residues 172-192 (GLILLLVASILVTIVTLSTIF).

The protein belongs to the MINAR family. As to quaternary structure, interacts with NOTCH2. In terms of tissue distribution, widely expressed in the cortex and Purkinje cells of cerebellum. Expressed in the inner ear, mainly in the hair cells, spiral ganglia, the spiral limbus, and the stria vascularis.

It localises to the lysosome membrane. The protein localises to the endoplasmic reticulum membrane. In terms of biological role, binds cholesterol and may regulate the distribution and homeostasis of cholesterol in hair cells. May play a role in angiogenesis. In Mus musculus (Mouse), this protein is Major intrinsically disordered NOTCH2-binding receptor 1-like homolog.